A 3230-amino-acid polypeptide reads, in one-letter code: Helicase SRCAP (3230 aa).

Residues 1-71 (MQSSPSPAHP…GPPDGATVPL (71 aa)) form a disordered region. The segment covering 26–41 (GSNPVSPASSSSPASS) has biased composition (low complexity). The HSA domain occupies 124–196 (LPKVPEPPRP…EQAKLRRIAS (73 aa)). Disordered stretches follow at residues 253 to 547 (QPLT…EEDD) and 559 to 581 (EEQS…LGPK). Positions 257–273 (SSKAGSSPCLGSSSAAS) are enriched in low complexity. Residues 283-313 (DDEDGDFQPQEDEEEDDEETIEVEEQQEGND) are compositionally biased toward acidic residues. Positions 315–329 (EAQRREIELLRREGE) are enriched in basic and acidic residues. A compositionally biased stretch (low complexity) spans 337–356 (RSLPPQLLEGPSSPSQTPSS). The span at 397–425 (DEDDEEFTANEEEAEDEEDTIAAEEQLEG) shows a compositional bias: acidic residues. Positions 426-441 (EVDHAMELSELAREGE) are enriched in basic and acidic residues. 3 stretches are compositionally biased toward acidic residues: residues 462 to 490 (SEDE…EPPQ), 503 to 517 (RSED…EEET), and 524 to 533 (EESESEESED). Positions 630 to 795 (VTMYEKKLNG…WSLMHFLMPH (166 aa)) constitute a Helicase ATP-binding domain. 643–650 (DEMGLGKT) is an ATP binding site. Disordered regions lie at residues 1017–1045 (APLG…PQVL), 1058–1125 (PPLI…PGSS), and 1138–1166 (TFPP…TPAP). Composition is skewed to pro residues over residues 1018–1030 (PLGP…PPGP) and 1058–1076 (PPLI…PPLQ). Positions 1093–1107 (LSGTSRPPTPTLSLK) are enriched in low complexity. Pro residues predominate over residues 1108–1123 (PTPPAPVRLSPAPPPG). Residues 1138-1160 (TFPPAAATTTSTTTATATTTAVP) show a composition bias toward low complexity. The residue at position 1172 (S1172) is a Phosphoserine. Disordered stretches follow at residues 1320–1366 (GLTP…APMP), 1406–1425 (SLPG…PLAS), 1629–1760 (VPVM…ASPV), and 1839–1893 (SRLP…EEKR). A compositionally biased stretch (pro residues) spans 1323-1336 (PVPPLAPAPRPPSS). The segment covering 1337-1360 (GLPAVLNPRPTLTPGRLPTPTLGT) has biased composition (low complexity). Residues 1675–1691 (PASTQTLALAPALAPTL) show a composition bias toward low complexity. Over residues 1692-1733 (GGSSPSQTLSLGTGNPQGPFPTQTLSLTPASSLVPTPAQTLS) the composition is skewed to polar residues. The span at 1750-1760 (PAPPLAPASPV) shows a compositional bias: pro residues. The Helicase C-terminal domain occupies 2044–2197 (KLQTLAVLLR…DMAIEGGNFT (154 aa)). Disordered regions lie at residues 2214–2233 (LEEP…EETV), 2271–2298 (FNEN…MSRA), 2327–2453 (VSRE…APAA), 2564–2583 (LELA…VPPK), 2598–3081 (KNLS…GRKS), and 3095–3230 (DLAD…KAKT). The segment covering 2215 to 2225 (EEPSSSSVPSA) has biased composition (low complexity). Basic and acidic residues-rich tracts occupy residues 2284-2298 (EAGR…MSRA), 2327-2358 (VSRE…RLPQ), and 2386-2403 (KAPE…RGAR). Residues 2438–2448 (RPAPRPRPTPA) show a composition bias toward pro residues. Composition is skewed to low complexity over residues 2564–2579 (LELA…SLSL) and 2600–2611 (LSLTPSAPSLTL). The segment covering 2669–2679 (EADRTSEELTE) has biased composition (basic and acidic residues). Residues 2694–2712 (VTAEVAAPSTSSSATSSPE) are compositionally biased toward low complexity. The span at 2782 to 2794 (SETSASPGSPSVR) shows a compositional bias: polar residues. Low complexity predominate over residues 2807 to 2817 (GPCEAAPSSSL). Over residues 2856-2868 (VKRRRGRPPKKNR) the composition is skewed to basic residues. Residues 2857 to 2869 (KRRRGRPPKKNRS) constitute a DNA-binding region (a.T hook 1). The segment covering 2913 to 2926 (IPGPQPLGPQPVHR) has biased composition (pro residues). Positions 2936–2948 (KRRRGRPPKARDL) form a DNA-binding region, a.T hook 2. Residues 2953-2965 (TISSAGDGNSESR) show a composition bias toward polar residues. A compositionally biased stretch (pro residues) spans 2967–2982 (QPPPHPSPLTPLPPLL). Positions 2983–3002 (VCPTATVANTVTTVTISTSP) are enriched in low complexity. The segment at residues 3004-3016 (KRKRGRPPKNPPS) is a DNA-binding region (a.T hook 3). The span at 3011 to 3020 (PKNPPSPRPS) shows a compositional bias: pro residues. Positions 3044–3053 (PQGQGESEGS) are enriched in low complexity. Residues 3168 to 3184 (SVEESEAEASGEEEEGD) are compositionally biased toward acidic residues.

It belongs to the SNF2/RAD54 helicase family. SWR1 subfamily. Interacts with CREBBP and EP300. May be part of a complex containing SRCAP, CREBBP, CARM1 and GRIP1. Component of the chromatin-remodeling SRCAP complex composed of at least SRCAP, DMAP1, RUVBL1, RUVBL2, ACTL6A, YEATS4, VPS72, ACTR6 and ZNHIT1. Component of a NuA4-related complex which contains EP400, TRRAP/PAF400, SRCAP, BRD8/SMAP, EPC1, DMAP1/DNMAP1, RUVBL1/TIP49, RUVBL2, actin, ACTL6A/BAF53A, VPS72 and YEATS4/GAS41. In terms of assembly, (Microbial infection) Interacts with hepatitis C virus (HCV) NS5A. As to quaternary structure, (Microbial infection) Interacts with human adenovirus 2 DBP.

It localises to the nucleus. Its function is as follows. Catalytic component of the SRCAP complex which mediates the ATP-dependent exchange of histone H2AZ/H2B dimers for nucleosomal H2A/H2B, leading to transcriptional regulation of selected genes by chromatin remodeling. Acts as a coactivator for CREB-mediated transcription, steroid receptor-mediated transcription, and Notch-mediated transcription. The sequence is that of Helicase SRCAP (SRCAP) from Homo sapiens (Human).